The primary structure comprises 1047 residues: Suppression of tumorigenicity 18 protein (1047 aa).

Disordered regions lie at residues 41 to 92 (TAED…HSTA), 168 to 221 (FLIH…VPKY), and 251 to 286 (DSETERKDPQNALAEPLDGNAQPSFPDVEEEDSESL). Residues 52–65 (NKRKSLLMKPRHYS) are compositionally biased toward basic residues. Residues 171–181 (HSDDGRDKIDD) show a composition bias toward basic and acidic residues. 2 CCHHC-type zinc fingers span residues 359–402 (PRPE…PLEI) and 403–446 (LAMH…KLAM). 8 residues coordinate Zn(2+): Cys-368, Cys-373, His-386, Cys-392, Cys-412, Cys-417, His-430, and Cys-436. Disordered regions lie at residues 523–563 (GRKT…SYSY) and 672–710 (YSKTHGKTEEEKEKDPVSSLENLEEKKFPGEASIPSPKP). The segment covering 550–563 (AHTQSPGRASSYSY) has biased composition (polar residues). The span at 677-687 (GKTEEEKEKDP) shows a compositional bias: basic and acidic residues. CCHHC-type zinc fingers lie at residues 715–758 (RDLK…LKSL), 759–802 (MAAN…GVKM), 807–850 (EEKE…QKEN), and 860–903 (KLNK…IKKG). 16 residues coordinate Zn(2+): Cys-724, Cys-729, His-742, Cys-748, Cys-768, Cys-773, His-786, Cys-792, Cys-816, Cys-821, His-834, Cys-840, Cys-869, Cys-874, His-887, and Cys-893. The stretch at 920 to 992 (IESDEEIRHL…AGLSQALISS (73 aa)) forms a coiled coil.

Belongs to the MYT1 family. Detected at low levels in heart, liver, kidney, skeletal muscle, pancreas, testis, ovary and prostate. Detected at even lower levels in mammary epithelial cells and breast cancer cells.

It is found in the nucleus. Repressor that binds to DNA sequences containing a bipartite element consisting of a direct repeat of the sequence 5'-AAAGTTT-3' separated by 2-9 nucleotides. Represses basal transcription activity from target promoters. Inhibits colony formation in cultured breast cancer cells. The polypeptide is Suppression of tumorigenicity 18 protein (ST18) (Homo sapiens (Human)).